Here is a 127-residue protein sequence, read N- to C-terminus: Fluoride-specific ion channel FluC (127 aa).

The next 4 helical transmembrane spans lie at 4–24 (LLLV…VGVG), 36–56 (GTFT…SWLA), 72–92 (VGVL…ALMI), and 101–121 (FTYS…GLLV). Gly76 and Thr79 together coordinate Na(+).

This sequence belongs to the fluoride channel Fluc/FEX (TC 1.A.43) family.

It is found in the cell inner membrane. The enzyme catalyses fluoride(in) = fluoride(out). Its activity is regulated as follows. Na(+) is not transported, but it plays an essential structural role and its presence is essential for fluoride channel function. Fluoride-specific ion channel. Important for reducing fluoride concentration in the cell, thus reducing its toxicity. The polypeptide is Fluoride-specific ion channel FluC (Caulobacter vibrioides (strain ATCC 19089 / CIP 103742 / CB 15) (Caulobacter crescentus)).